Reading from the N-terminus, the 833-residue chain is Protein PAT1 homolog 1 (833 aa).

3 disordered regions span residues D279–M313, N398–P427, and E492–L549. Positions P303–M313 are enriched in low complexity. The span at N398–H408 shows a compositional bias: polar residues.

It belongs to the PAT1 family.

The protein resides in the cytoplasm. It is found in the P-body. Functionally, RNA-binding protein involved in deadenylation-dependent decapping of mRNAs, leading to the degradation of mRNAs. Acts as a scaffold protein that connects deadenylation and decapping machinery. Required for the recruitment of P-body components such as cgh-1 in somatic blastomeres. May play a role in recruiting the decapping enzyme dcap-1 to cytoplasmic puncta in the cell body of the posterior touch receptor neuron, PLM. The protein is Protein PAT1 homolog 1 of Caenorhabditis elegans.